The following is a 220-amino-acid chain: MSGLLSRETFAKITNPLASALLRAGFTPDTVTIFGTAASVVAALTLFPTGHLFWGGMAVWLFAMFDMLDGAMARARGGGTRFGAVLDATCDRVADGAVFAGLVWWAAFGWGSTSLVVATLICMITSQVISYVKARAEASGLRADGGLIERPERLIIVLAGAIFSGGFGVQWPLHTAMWVLAVASLVTVAQRMHAVRTSPGALDLLPNSDAGQDTAETNQP.

The next 2 helical transmembrane spans lie at Leu-21–Leu-46 and Leu-52–Met-72. Residue Asp-29 to Thr-32 coordinates a CDP-1,2-diacyl-sn-glycerol. Asp-66 and Asp-69 together coordinate Mg(2+). A CDP-1,2-diacyl-sn-glycerol is bound by residues Gly-70, Arg-74, and Thr-80. Residues Asp-87 and Asp-91 each contribute to the Mg(2+) site. Asp-91 (proton acceptor) is an active-site residue. 4 helical membrane passes run Val-93–Trp-110, Val-116–Ala-134, Leu-154–Trp-171, and Met-177–Ala-194.

Belongs to the CDP-alcohol phosphatidyltransferase class-I family. As to quaternary structure, homodimer. Requires Mg(2+) as cofactor.

It is found in the cell membrane. It carries out the reaction a CDP-1,2-diacyl-sn-glycerol + 1D-myo-inositol 3-phosphate = a 1,2-diacyl-sn-glycero-3-phospho-(1D-myo-inositol-3-phosphate) + CMP + H(+). The catalysed reaction is 1,2-di-(9Z-octadecenoyl)-sn-glycero-3-cytidine-5'-diphosphate + 1D-myo-inositol 3-phosphate = 1,2-di-(9Z-octadecenoyl)-sn-glycero-3-phospho-(1D-myo-inositol-3-phosphate) + CMP + H(+). Its pathway is phospholipid metabolism; phosphatidylinositol phosphate biosynthesis. Its function is as follows. Catalyzes the conjugation of the 1'-hydroxyl group of D-myo-inositol-3-phosphate (also named L-myo-inositol-1-phosphate) with a lipid tail of cytidine diphosphate diacylglycerol (CDP-DAG), forming phosphatidylinositol phosphate (PIP) and CMP. PIP is a precursor of phosphatidylinositol (PI) which is an essential lipid for mycobacteria required for formation of their cell wall. This chain is Phosphatidylinositol phosphate synthase, found in Mycobacteroides abscessus (strain ATCC 19977 / DSM 44196 / CCUG 20993 / CIP 104536 / JCM 13569 / NCTC 13031 / TMC 1543 / L948) (Mycobacterium abscessus).